The primary structure comprises 360 residues: Phospho-N-acetylmuramoyl-pentapeptide-transferase (360 aa).

Helical transmembrane passes span Arg25–Ile45, Thr73–Leu93, Tyr97–Tyr117, Tyr134–Thr154, Val168–Ser188, Gly199–Ser219, Ser236–Phe256, Val263–Ile283, Ile288–Val308, and Val338–Lys358.

The protein belongs to the glycosyltransferase 4 family. MraY subfamily. It depends on Mg(2+) as a cofactor.

The protein localises to the cell inner membrane. The enzyme catalyses UDP-N-acetyl-alpha-D-muramoyl-L-alanyl-gamma-D-glutamyl-meso-2,6-diaminopimeloyl-D-alanyl-D-alanine + di-trans,octa-cis-undecaprenyl phosphate = di-trans,octa-cis-undecaprenyl diphospho-N-acetyl-alpha-D-muramoyl-L-alanyl-D-glutamyl-meso-2,6-diaminopimeloyl-D-alanyl-D-alanine + UMP. Its pathway is cell wall biogenesis; peptidoglycan biosynthesis. In terms of biological role, catalyzes the initial step of the lipid cycle reactions in the biosynthesis of the cell wall peptidoglycan: transfers peptidoglycan precursor phospho-MurNAc-pentapeptide from UDP-MurNAc-pentapeptide onto the lipid carrier undecaprenyl phosphate, yielding undecaprenyl-pyrophosphoryl-MurNAc-pentapeptide, known as lipid I. The chain is Phospho-N-acetylmuramoyl-pentapeptide-transferase from Pseudomonas putida (strain ATCC 700007 / DSM 6899 / JCM 31910 / BCRC 17059 / LMG 24140 / F1).